The following is a 579-amino-acid chain: Rho guanine nucleotide exchange factor 25 (579 aa).

Disordered regions lie at residues 27–61 (AVPG…GERE) and 172–194 (VKAQ…EQKK). The DH domain occupies 199-375 (RSMFVLSELV…CFVPKRCNDM (177 aa)). The interval 317 to 338 (LGHRLQLSDLLIKPVQRIMKYQ) is important for binding to Rho GTPases. The PH domain occupies 380-499 (RLRGFEGKLT…ESQTNSLGRS (120 aa)). A sufficient to bind activated GNAQ region spans residues 472–498 (SQRDFLNALQSPIEYQRRESQTNSLGR). 2 disordered regions span residues 487-516 (QRRE…VSMH) and 546-579 (LSET…EDEL).

Interacts with activated GNAQ and GNA11. Interacts with RHOA, CDC42 and RAC1. Interacts (via the DH domain) with POPDC1 (via the C-terminus cytoplasmic tail).

Its subcellular location is the cytoplasm. The protein resides in the myofibril. It is found in the sarcomere. The protein localises to the cell membrane. Functionally, may play a role in actin cytoskeleton reorganization in different tissues since its activation induces formation of actin stress fibers. It works as a guanine nucleotide exchange factor for Rho family of small GTPases. Links specifically G alpha q/11-coupled receptors to RHOA activation. May be an important regulator of processes involved in axon and dendrite formation. In neurons seems to be an exchange factor primarily for RAC1. Involved in skeletal myogenesis. The sequence is that of Rho guanine nucleotide exchange factor 25 (Arhgef25) from Rattus norvegicus (Rat).